A 289-amino-acid chain; its full sequence is Leucine--tRNA ligase subunit beta (289 aa).

A 'KMSKS' region motif is present at residues 45–49 (KMSKS). Lys-48 is an ATP binding site.

The protein belongs to the class-I aminoacyl-tRNA synthetase family. In terms of assembly, seems to consist of an alpha chain and a beta chain.

The protein localises to the cytoplasm. The catalysed reaction is tRNA(Leu) + L-leucine + ATP = L-leucyl-tRNA(Leu) + AMP + diphosphate. The polypeptide is Leucine--tRNA ligase subunit beta (leuS') (Aquifex aeolicus (strain VF5)).